The sequence spans 154 residues: Crossover junction endodeoxyribonuclease RuvC (154 aa).

Residues Asp-7, Glu-67, and Asp-139 contribute to the active site. Mg(2+) contacts are provided by Asp-7, Glu-67, and Asp-139.

It belongs to the RuvC family. Homodimer which binds Holliday junction (HJ) DNA. The HJ becomes 2-fold symmetrical on binding to RuvC with unstacked arms; it has a different conformation from HJ DNA in complex with RuvA. In the full resolvosome a probable DNA-RuvA(4)-RuvB(12)-RuvC(2) complex forms which resolves the HJ. The cofactor is Mg(2+).

Its subcellular location is the cytoplasm. The catalysed reaction is Endonucleolytic cleavage at a junction such as a reciprocal single-stranded crossover between two homologous DNA duplexes (Holliday junction).. The RuvA-RuvB-RuvC complex processes Holliday junction (HJ) DNA during genetic recombination and DNA repair. Endonuclease that resolves HJ intermediates. Cleaves cruciform DNA by making single-stranded nicks across the HJ at symmetrical positions within the homologous arms, yielding a 5'-phosphate and a 3'-hydroxyl group; requires a central core of homology in the junction. The consensus cleavage sequence is 5'-(A/T)TT(C/G)-3'. Cleavage occurs on the 3'-side of the TT dinucleotide at the point of strand exchange. HJ branch migration catalyzed by RuvA-RuvB allows RuvC to scan DNA until it finds its consensus sequence, where it cleaves and resolves the cruciform DNA. The polypeptide is Crossover junction endodeoxyribonuclease RuvC (Synechococcus sp. (strain CC9605)).